Reading from the N-terminus, the 280-residue chain is Transcription factor HES-1 (280 aa).

The segment at 1-44 is disordered; that stretch reads MPADIMEKNSSSPVAATPASVNTTPDKPKTASEHRKSSKPIMEK. The span at 10-21 shows a compositional bias: low complexity; the sequence is SSSPVAATPASV. Residues 26 to 35 are compositionally biased toward basic and acidic residues; that stretch reads DKPKTASEHR. The 58-residue stretch at 34-91 folds into the bHLH domain; the sequence is HRKSSKPIMEKRRRARINESLSQLKTLILDALKKDSSRHSKLEKADILEMTVKHLRNL. In terms of domain architecture, Orange spans 110 to 143; it reads YRAGFSECMNEVTRFLSTCEGVNTEVRTRLLGHL. Disordered stretches follow at residues 157–200 and 254–280; these read GQPH…PPGG and TSVGPNAVSPSSGPSLTADSMWRPWRN. Composition is skewed to pro residues over residues 164–174 and 181–200; these read QAPPPPPPGPG and FAPPPPLVPIPGGAAPPPGG. A compositionally biased stretch (polar residues) spans 254-271; it reads TSVGPNAVSPSSGPSLTA. The WRPW motif motif lies at 275–278; sequence WRPW.

In terms of assembly, transcription repression requires formation of a complex with a corepressor protein of the Groucho/TLE family. Interacts with SIRT1. Interacts (via WPRW motif) with TLE1, and more weakly with TLE2. Interacts with HES6. Interacts with an FA complex, composed of FANCA, FANCF, FANCG and FANCL, but not of FANCC, nor FANCE.

It is found in the nucleus. Functionally, transcriptional repressor of genes that require a bHLH protein for their transcription. May act as a negative regulator of myogenesis by inhibiting the functions of MYOD1 and ASH1. Binds DNA on N-box motifs: 5'-CACNAG-3' with high affinity and on E-box motifs: 5'-CANNTG-3' with low affinity. May play a role in a functional FA core complex response to DNA cross-link damage, being required for the stability and nuclear localization of FA core complex proteins, as well as for FANCD2 monoubiquitination in response to DNA damage. This chain is Transcription factor HES-1 (HES1), found in Bos taurus (Bovine).